Consider the following 275-residue polypeptide: Elongation factor Ts (275 aa).

Residues 76–79 (TDFV) are involved in Mg(2+) ion dislocation from EF-Tu.

The protein belongs to the EF-Ts family.

It is found in the cytoplasm. Its function is as follows. Associates with the EF-Tu.GDP complex and induces the exchange of GDP to GTP. It remains bound to the aminoacyl-tRNA.EF-Tu.GTP complex up to the GTP hydrolysis stage on the ribosome. This chain is Elongation factor Ts, found in Mycolicibacterium paratuberculosis (strain ATCC BAA-968 / K-10) (Mycobacterium paratuberculosis).